The following is a 496-amino-acid chain: Acetyl-coenzyme A carboxylase carboxyl transferase subunit beta, chloroplastic (496 aa).

A CoA carboxyltransferase N-terminal domain is found at 229–496; it reads LWVQCENCYG…FFPLNKNFIK (268 aa). 4 residues coordinate Zn(2+): C233, C236, C252, and C255. Residues 233-255 form a C4-type zinc finger; sequence CENCYGLNYKKFFRLKLHICEQC.

The protein belongs to the AccD/PCCB family. In terms of assembly, acetyl-CoA carboxylase is a heterohexamer composed of biotin carboxyl carrier protein, biotin carboxylase and 2 subunits each of ACCase subunit alpha and ACCase plastid-coded subunit beta (accD). Requires Zn(2+) as cofactor.

The protein resides in the plastid. Its subcellular location is the chloroplast stroma. It catalyses the reaction N(6)-carboxybiotinyl-L-lysyl-[protein] + acetyl-CoA = N(6)-biotinyl-L-lysyl-[protein] + malonyl-CoA. It functions in the pathway lipid metabolism; malonyl-CoA biosynthesis; malonyl-CoA from acetyl-CoA: step 1/1. In terms of biological role, component of the acetyl coenzyme A carboxylase (ACC) complex. Biotin carboxylase (BC) catalyzes the carboxylation of biotin on its carrier protein (BCCP) and then the CO(2) group is transferred by the transcarboxylase to acetyl-CoA to form malonyl-CoA. This Ranunculus macranthus (Large buttercup) protein is Acetyl-coenzyme A carboxylase carboxyl transferase subunit beta, chloroplastic.